The chain runs to 455 residues: Ammonium transporter Rh type B (455 aa).

Over 1–13 (MAWSPRHSAGRRL) the chain is Cytoplasmic. A helical membrane pass occupies residues 14–34 (QLPLLCLLLQGATAILFAVFV). The Extracellular portion of the chain corresponds to 35–61 (RYNRETDAALWHWGNHSNADNEFYFRY). An N-linked (GlcNAc...) asparagine glycan is attached at Asn-49. The chain crosses the membrane as a helical span at residues 62 to 82 (PSFQDVHAMIFVGFGFLMVFL). Over 83–86 (QRYG) the chain is Cytoplasmic. The helical transmembrane segment at 87–107 (FGSVGFTFLLAAFALQWSTLI) threads the bilayer. Topologically, residues 108 to 124 (QGFFHSFRGGYILVGME) are extracellular. The chain crosses the membrane as a helical span at residues 125-145 (SMINADFCAGAVLISFGAVLG). Residues 146 to 151 (KTGPVQ) lie on the Cytoplasmic side of the membrane. The helical transmembrane segment at 152–172 (LLLMALLEVVLFGLNEFVLLS) threads the bilayer. Residues 173-179 (LLEVKDA) lie on the Extracellular side of the membrane. Residues 180–200 (GGSMTIHTFGAYFGLILSRVL) traverse the membrane as a helical segment. Over 201–219 (YRPQLEKSKHRQGSVYHSD) the chain is Cytoplasmic. A helical transmembrane segment spans residues 220-240 (LFAMIGTIFLWIFWPSFNSAP). Residues 241–253 (TALGDGQHRTALN) lie on the Extracellular side of the membrane. The chain crosses the membrane as a helical span at residues 254-274 (TYYSLTASTLSTFALSALVGG). The Cytoplasmic portion of the chain corresponds to 275 to 277 (DGR). Residues 278–298 (LDMVHVQNAALAGGVVVGTSA) traverse the membrane as a helical segment. Residue Glu-299 is a topological domain, extracellular. Residues 300-320 (MMLTPFGALAAGFLAGAISTL) traverse the membrane as a helical segment. Over 321–343 (GYKFVTPILESKLKVQDTCGVHN) the chain is Cytoplasmic. A helical transmembrane segment spans residues 344–364 (LHGMPGVLGALLGGLVAGLAT). Topologically, residues 365–393 (REAYGDGLESVFPLIAEGQRSATSQAMHQ) are extracellular. Residues 394-414 (LFGLFVTLTFASVGGGLGGLL) traverse the membrane as a helical segment. Topologically, residues 415-455 (LRLPILDSPPDSQCYEDQIYWEVPGEHEHLAQGSEETETQA) are cytoplasmic. Residues 416 to 424 (RLPILDSPP) are interaction with ANK3. A Basolateral sorting signal motif is present at residues 429 to 432 (YEDQ).

It belongs to the ammonium transporter (TC 2.A.49) family. Rh subfamily. As to quaternary structure, interacts (via C-terminus) with ANK2 and ANK3; required for targeting to the basolateral membrane. N-glycosylated.

The protein resides in the cell membrane. The protein localises to the basolateral cell membrane. It carries out the reaction NH4(+)(in) = NH4(+)(out). The catalysed reaction is methylamine(out) = methylamine(in). The enzyme catalyses CO2(out) = CO2(in). Ammonium transporter involved in the maintenance of acid-base homeostasis. Transports ammonium and its related derivative methylammonium across the basolateral plasma membrane of epithelial cells likely contributing to renal transepithelial ammonia transport and ammonia metabolism. May transport either NH4(+) or NH3 ammonia species predominantly mediating an electrogenic NH4(+) transport. May act as a CO2 channel providing for renal acid secretion. This Bos taurus (Bovine) protein is Ammonium transporter Rh type B (RHBG).